Here is a 152-residue protein sequence, read N- to C-terminus: CASP-like protein 5C1 (152 aa).

The Cytoplasmic segment spans residues 1–12 (MVRTTASFGTSS). Residues 13–33 (SFVLRLGQTLFSSASLLFMCF) form a helical membrane-spanning segment. Residues 34-44 (NDDEDFYAYTT) are Extracellular-facing. The helical transmembrane segment at 45-65 (FCYLVTVMGLVTPWSVTLALM) threads the bilayer. Over 66–80 (EAYSILVKKLPMQAT) the chain is Cytoplasmic. A helical membrane pass occupies residues 81–101 (VISVIVAGDFVLSFLSLGGAC). The Extracellular portion of the chain corresponds to 102-126 (STASVAVLLMDAGEKQCDRYKLSAT). Residues 127–147 (MAFLSSFLSFASTFFNFCLLP) traverse the membrane as a helical segment. Over 148–152 (SLMSH) the chain is Cytoplasmic.

The protein belongs to the Casparian strip membrane proteins (CASP) family. In terms of assembly, homodimer and heterodimers.

It localises to the cell membrane. This is CASP-like protein 5C1 from Arabidopsis thaliana (Mouse-ear cress).